A 263-amino-acid polypeptide reads, in one-letter code: MGDKLRLSIGILGNGASLLLYTAPIVTFSRVFKKKSTEEFSCFPYVMTLFNCLIYTWYGLPIVSHLWENLPLVTINGVGILLESIFIFIYFYYASPKEKIKVGVTFVPVIVGFGLTTAISALVFDDHRHRKSFVGSVGLVASISMYGSPLVVMKKVIETRSVEYMPFYLSFFSFLASSLWLAYGLLSHDLFLASPNMVATPLGILQLILYFKYKNKKDLAPTTMVITKRNDHDDKNKATLEFVVDVDRNSDTNEKNSNNASSI.

At 1–7 (MGDKLRL) the chain is on the extracellular side. Residues 8-28 (SIGILGNGASLLLYTAPIVTF) traverse the membrane as a helical segment. Positions 9–97 (IGILGNGASL…FIYFYYASPK (89 aa)) constitute a MtN3/slv 1 domain. Residues 29-42 (SRVFKKKSTEEFSC) are Cytoplasmic-facing. The chain crosses the membrane as a helical span at residues 43 to 63 (FPYVMTLFNCLIYTWYGLPIV). Residues 64-71 (SHLWENLP) are Extracellular-facing. A helical membrane pass occupies residues 72-92 (LVTINGVGILLESIFIFIYFY). At 93–103 (YASPKEKIKVG) the chain is on the cytoplasmic side. A helical membrane pass occupies residues 104–124 (VTFVPVIVGFGLTTAISALVF). Residues 125–132 (DDHRHRKS) are Extracellular-facing. A helical membrane pass occupies residues 133–153 (FVGSVGLVASISMYGSPLVVM). A MtN3/slv 2 domain is found at 133-217 (FVGSVGLVAS…ILYFKYKNKK (85 aa)). Residues 154 to 165 (KKVIETRSVEYM) lie on the Cytoplasmic side of the membrane. Residues 166–186 (PFYLSFFSFLASSLWLAYGLL) form a helical membrane-spanning segment. The Extracellular segment spans residues 187–190 (SHDL). Residues 191-211 (FLASPNMVATPLGILQLILYF) form a helical membrane-spanning segment. The Cytoplasmic portion of the chain corresponds to 212–263 (KYKNKKDLAPTTMVITKRNDHDDKNKATLEFVVDVDRNSDTNEKNSNNASSI).

It belongs to the SWEET sugar transporter family. Forms heterooligomers with SWEET11, SWEET13 and SWEET17.

The protein resides in the cell membrane. Mediates both low-affinity uptake and efflux of sugar across the plasma membrane. In Arabidopsis thaliana (Mouse-ear cress), this protein is Bidirectional sugar transporter SWEET3.